Here is a 408-residue protein sequence, read N- to C-terminus: Phosphoglycerate kinase (408 aa).

Residues 24 to 26 (DLN), Arg39, 62 to 65 (HLGR), Arg121, and Arg161 contribute to the substrate site. ATP contacts are provided by residues Lys211, Gly307, Glu338, and 364 to 367 (GGDS).

Belongs to the phosphoglycerate kinase family. In terms of assembly, monomer.

The protein localises to the cytoplasm. The enzyme catalyses (2R)-3-phosphoglycerate + ATP = (2R)-3-phospho-glyceroyl phosphate + ADP. It participates in carbohydrate degradation; glycolysis; pyruvate from D-glyceraldehyde 3-phosphate: step 2/5. This is Phosphoglycerate kinase from Paenarthrobacter aurescens (strain TC1).